The chain runs to 322 residues: 4-diphosphocytidyl-2-C-methyl-D-erythritol kinase (322 aa).

Residue Lys-18 is part of the active site. 130 to 140 contributes to the ATP binding site; the sequence is PMGAGLGGGSS. The active site involves Asp-172.

It belongs to the GHMP kinase family. IspE subfamily.

It catalyses the reaction 4-CDP-2-C-methyl-D-erythritol + ATP = 4-CDP-2-C-methyl-D-erythritol 2-phosphate + ADP + H(+). It functions in the pathway isoprenoid biosynthesis; isopentenyl diphosphate biosynthesis via DXP pathway; isopentenyl diphosphate from 1-deoxy-D-xylulose 5-phosphate: step 3/6. Its function is as follows. Catalyzes the phosphorylation of the position 2 hydroxy group of 4-diphosphocytidyl-2C-methyl-D-erythritol. This chain is 4-diphosphocytidyl-2-C-methyl-D-erythritol kinase, found in Psychrobacter cryohalolentis (strain ATCC BAA-1226 / DSM 17306 / VKM B-2378 / K5).